The primary structure comprises 88 residues: UPF0250 protein Ssed_3490 (88 aa).

Belongs to the UPF0250 family.

The protein is UPF0250 protein Ssed_3490 of Shewanella sediminis (strain HAW-EB3).